A 277-amino-acid polypeptide reads, in one-letter code: Adaptin ear-binding coat-associated protein 1 (277 aa).

The disordered stretch occupies residues 164–277; the sequence is GNITAKKGGT…APQPSNWVQF (114 aa). Residues 187–201 show a composition bias toward pro residues; that stretch reads LPPPPGGKVTIPPPS. Phosphothreonine is present on Thr-211. Residues 222 to 234 are compositionally biased toward low complexity; it reads SNDSDILLDLDSP. Over residues 235-245 the composition is skewed to pro residues; the sequence is APVPTSAPAPA. 2 short sequence motifs (WXXF motif) span residues 254-257 and 274-277; these read WGDF and WVQF. The segment covering 258–277 has biased composition (polar residues); sequence STASSSVPNQAPQPSNWVQF.

The protein belongs to the NECAP family. In terms of assembly, interacts with AP1G1 and AP2A1 components of the adapter protein complexes AP-1 and AP-2. Interacts with the GAE domain proteins GGA1, GGA2 and GGA3. Interacts with AP2A2. As to expression, expressed predominantly in brain (at protein level).

It is found in the cytoplasmic vesicle. It localises to the clathrin-coated vesicle membrane. Its subcellular location is the cell membrane. Functionally, involved in endocytosis. In Rattus norvegicus (Rat), this protein is Adaptin ear-binding coat-associated protein 1 (Necap1).